Reading from the N-terminus, the 69-residue chain is KKDDYPVDTAKRNCKFPCNVIDKEGYCDNLCKGRKAEKGYCYRLNASCYCYGLPDDSPTKKSGRCNPNL.

An LCN-type CS-alpha/beta domain is found at 2-66; it reads KDDYPVDTAK…SPTKKSGRCN (65 aa). Disulfide bonds link Cys-14–Cys-65, Cys-18–Cys-41, Cys-27–Cys-48, and Cys-31–Cys-50.

Belongs to the long (4 C-C) scorpion toxin superfamily. Sodium channel inhibitor family. Expressed by the venom gland.

Its subcellular location is the secreted. Inhibits voltage-gated sodium channels (Nav). This toxin shows insect lethality against crickets. In Tityus macrochirus (Scorpion), this protein is Toxin Tma3.